We begin with the raw amino-acid sequence, 82 residues long: Small ribosomal subunit protein uS17 (82 aa).

Belongs to the universal ribosomal protein uS17 family. Part of the 30S ribosomal subunit.

In terms of biological role, one of the primary rRNA binding proteins, it binds specifically to the 5'-end of 16S ribosomal RNA. This chain is Small ribosomal subunit protein uS17, found in Shewanella sp. (strain W3-18-1).